Here is a 200-residue protein sequence, read N- to C-terminus: Beta-1,6-glucan synthesis-associated protein KEG1 (200 aa).

Residues 1 to 15 (MAGIKLTHKLYQYYQ) are Lumenal-facing. The chain crosses the membrane as a helical span at residues 16-36 (LATSFLYAALLIRWLILMPLV). At 37-44 (GSRFLPGG) the chain is on the cytoplasmic side. A helical transmembrane segment spans residues 45-65 (IHEFLIYLMFYSSIMEVIWLL). Residues 66-82 (RFHGFKYGLLSRTFLKD) are Lumenal-facing. Residues 83–103 (LNFIYLVSVIHFYDDYEHALI) form a helical membrane-spanning segment. Residues 104–145 (LKNASYSSFIISLSLSQAYCHWCKLFKRKGVKERTLVWKVNT) lie on the Cytoplasmic side of the membrane. Residues 146–166 (FVTLPILYLSEFALLLLNIQV) form a helical membrane-spanning segment. The Lumenal segment spans residues 167–173 (KNYHSTP). A helical transmembrane segment spans residues 174–194 (TLDIINRVVLLAYFPVLLTAY). The Cytoplasmic portion of the chain corresponds to 195 to 200 (KKLLTK).

As to quaternary structure, interacts with KRE6.

It localises to the endoplasmic reticulum membrane. In terms of biological role, involved in the biosynthesis of (1-&gt;6)-beta-D-glucan polymers of the cell wall. Required for viability. Involved in maintaining chromosome stability. In Saccharomyces cerevisiae (strain ATCC 204508 / S288c) (Baker's yeast), this protein is Beta-1,6-glucan synthesis-associated protein KEG1 (KEG1).